The sequence spans 331 residues: Holliday junction branch migration complex subunit RuvB (331 aa).

The interval 1 to 186 (MAKTMMQDRL…FGIVQRLEFY (186 aa)) is large ATPase domain (RuvB-L). Residues Ile25, Arg26, Gly67, Lys70, Thr71, Thr72, 133–135 (EDF), Arg176, Tyr186, and Arg223 contribute to the ATP site. Thr71 is a Mg(2+) binding site. The segment at 187–257 (NIADLTTIVS…IAGSALDMLA (71 aa)) is small ATPAse domain (RuvB-S). Residues 260–331 (RRGLDHLDRR…LTQMAIDQML (72 aa)) are head domain (RuvB-H). Residues Arg296, Arg315, and Arg320 each coordinate DNA.

The protein belongs to the RuvB family. Homohexamer. Forms an RuvA(8)-RuvB(12)-Holliday junction (HJ) complex. HJ DNA is sandwiched between 2 RuvA tetramers; dsDNA enters through RuvA and exits via RuvB. An RuvB hexamer assembles on each DNA strand where it exits the tetramer. Each RuvB hexamer is contacted by two RuvA subunits (via domain III) on 2 adjacent RuvB subunits; this complex drives branch migration. In the full resolvosome a probable DNA-RuvA(4)-RuvB(12)-RuvC(2) complex forms which resolves the HJ.

The protein resides in the cytoplasm. It carries out the reaction ATP + H2O = ADP + phosphate + H(+). Its function is as follows. The RuvA-RuvB-RuvC complex processes Holliday junction (HJ) DNA during genetic recombination and DNA repair, while the RuvA-RuvB complex plays an important role in the rescue of blocked DNA replication forks via replication fork reversal (RFR). RuvA specifically binds to HJ cruciform DNA, conferring on it an open structure. The RuvB hexamer acts as an ATP-dependent pump, pulling dsDNA into and through the RuvAB complex. RuvB forms 2 homohexamers on either side of HJ DNA bound by 1 or 2 RuvA tetramers; 4 subunits per hexamer contact DNA at a time. Coordinated motions by a converter formed by DNA-disengaged RuvB subunits stimulates ATP hydrolysis and nucleotide exchange. Immobilization of the converter enables RuvB to convert the ATP-contained energy into a lever motion, pulling 2 nucleotides of DNA out of the RuvA tetramer per ATP hydrolyzed, thus driving DNA branch migration. The RuvB motors rotate together with the DNA substrate, which together with the progressing nucleotide cycle form the mechanistic basis for DNA recombination by continuous HJ branch migration. Branch migration allows RuvC to scan DNA until it finds its consensus sequence, where it cleaves and resolves cruciform DNA. The protein is Holliday junction branch migration complex subunit RuvB of Psychrobacter cryohalolentis (strain ATCC BAA-1226 / DSM 17306 / VKM B-2378 / K5).